The sequence spans 434 residues: Nicotinate phosphoribosyltransferase (434 aa).

His242 carries the post-translational modification Phosphohistidine; by autocatalysis.

This sequence belongs to the NAPRTase family. Transiently phosphorylated on a His residue during the reaction cycle. Phosphorylation strongly increases the affinity for substrates and increases the rate of nicotinate D-ribonucleotide production. Dephosphorylation regenerates the low-affinity form of the enzyme, leading to product release.

The catalysed reaction is nicotinate + 5-phospho-alpha-D-ribose 1-diphosphate + ATP + H2O = nicotinate beta-D-ribonucleotide + ADP + phosphate + diphosphate. It functions in the pathway cofactor biosynthesis; NAD(+) biosynthesis; nicotinate D-ribonucleotide from nicotinate: step 1/1. In terms of biological role, catalyzes the synthesis of beta-nicotinate D-ribonucleotide from nicotinate and 5-phospho-D-ribose 1-phosphate at the expense of ATP. The sequence is that of Nicotinate phosphoribosyltransferase from Allorhizobium ampelinum (strain ATCC BAA-846 / DSM 112012 / S4) (Agrobacterium vitis (strain S4)).